A 353-amino-acid chain; its full sequence is Photosystem II protein D1 (353 aa).

T2 is subject to N-acetylthreonine. T2 is subject to Phosphothreonine. Transmembrane regions (helical) follow at residues 29–46, 118–133, and 142–156; these read YIGWFGVLMIPTLLTATS, HFLLGVACYMGREWEL, and WIAVAYSAPVAAATA. H118 contacts chlorophyll a. Y126 contacts pheophytin a. 2 residues coordinate [CaMn4O5] cluster: D170 and E189. Residues 197-218 form a helical membrane-spanning segment; sequence FHMLGVAGVFGGSLFSAMHGSL. Residue H198 participates in chlorophyll a binding. A quinone-binding positions include H215 and 264 to 265; that span reads SF. H215 contacts Fe cation. Residue H272 participates in Fe cation binding. A helical membrane pass occupies residues 274 to 288; sequence FLAAWPVIGIWFTAL. Residues H332, E333, D342, and A344 each contribute to the [CaMn4O5] cluster site. The propeptide occupies 345–353; the sequence is AIEAPSTNG.

It belongs to the reaction center PufL/M/PsbA/D family. As to quaternary structure, PSII is composed of 1 copy each of membrane proteins PsbA, PsbB, PsbC, PsbD, PsbE, PsbF, PsbH, PsbI, PsbJ, PsbK, PsbL, PsbM, PsbT, PsbX, PsbY, PsbZ, Psb30/Ycf12, at least 3 peripheral proteins of the oxygen-evolving complex and a large number of cofactors. It forms dimeric complexes. The cofactor is The D1/D2 heterodimer binds P680, chlorophylls that are the primary electron donor of PSII, and subsequent electron acceptors. It shares a non-heme iron and each subunit binds pheophytin, quinone, additional chlorophylls, carotenoids and lipids. D1 provides most of the ligands for the Mn4-Ca-O5 cluster of the oxygen-evolving complex (OEC). There is also a Cl(-1) ion associated with D1 and D2, which is required for oxygen evolution. The PSII complex binds additional chlorophylls, carotenoids and specific lipids.. Tyr-161 forms a radical intermediate that is referred to as redox-active TyrZ, YZ or Y-Z. Post-translationally, C-terminally processed by CTPA; processing is essential to allow assembly of the oxygen-evolving complex and thus photosynthetic growth.

It localises to the plastid. It is found in the chloroplast thylakoid membrane. It carries out the reaction 2 a plastoquinone + 4 hnu + 2 H2O = 2 a plastoquinol + O2. In terms of biological role, photosystem II (PSII) is a light-driven water:plastoquinone oxidoreductase that uses light energy to abstract electrons from H(2)O, generating O(2) and a proton gradient subsequently used for ATP formation. It consists of a core antenna complex that captures photons, and an electron transfer chain that converts photonic excitation into a charge separation. The D1/D2 (PsbA/PsbD) reaction center heterodimer binds P680, the primary electron donor of PSII as well as several subsequent electron acceptors. The protein is Photosystem II protein D1 of Amaranthus hybridus (Slim amaranth).